A 398-amino-acid chain; its full sequence is Succinate--CoA ligase [ADP-forming] subunit beta (398 aa).

The 242-residue stretch at 9–250 (KQLFARYGVP…VDEEDPVELQ (242 aa)) folds into the ATP-grasp domain. ATP contacts are provided by residues lysine 50, 57–59 (GRG), glutamate 104, leucine 107, and glutamate 112. Mg(2+) contacts are provided by asparagine 205 and aspartate 219. Substrate-binding positions include asparagine 270 and 327–329 (GIM).

It belongs to the succinate/malate CoA ligase beta subunit family. As to quaternary structure, heterotetramer of two alpha and two beta subunits. It depends on Mg(2+) as a cofactor.

The catalysed reaction is succinate + ATP + CoA = succinyl-CoA + ADP + phosphate. The enzyme catalyses GTP + succinate + CoA = succinyl-CoA + GDP + phosphate. The protein operates within carbohydrate metabolism; tricarboxylic acid cycle; succinate from succinyl-CoA (ligase route): step 1/1. Succinyl-CoA synthetase functions in the citric acid cycle (TCA), coupling the hydrolysis of succinyl-CoA to the synthesis of either ATP or GTP and thus represents the only step of substrate-level phosphorylation in the TCA. The beta subunit provides nucleotide specificity of the enzyme and binds the substrate succinate, while the binding sites for coenzyme A and phosphate are found in the alpha subunit. The sequence is that of Succinate--CoA ligase [ADP-forming] subunit beta from Sorangium cellulosum (strain So ce56) (Polyangium cellulosum (strain So ce56)).